The primary structure comprises 186 residues: Ribosome-recycling factor (186 aa).

It belongs to the RRF family.

Its subcellular location is the cytoplasm. Functionally, responsible for the release of ribosomes from messenger RNA at the termination of protein biosynthesis. May increase the efficiency of translation by recycling ribosomes from one round of translation to another. This is Ribosome-recycling factor from Bordetella petrii (strain ATCC BAA-461 / DSM 12804 / CCUG 43448).